The chain runs to 263 residues: Putative methyltransferase DDB_G0268948 (263 aa).

This sequence belongs to the methyltransferase superfamily.

This chain is Putative methyltransferase DDB_G0268948, found in Dictyostelium discoideum (Social amoeba).